Here is a 286-residue protein sequence, read N- to C-terminus: 33 kDa chaperonin (286 aa).

Intrachain disulfides connect cysteine 225/cysteine 227 and cysteine 258/cysteine 261.

The protein belongs to the HSP33 family. In terms of processing, under oxidizing conditions two disulfide bonds are formed involving the reactive cysteines. Under reducing conditions zinc is bound to the reactive cysteines and the protein is inactive.

It localises to the cytoplasm. In terms of biological role, redox regulated molecular chaperone. Protects both thermally unfolding and oxidatively damaged proteins from irreversible aggregation. Plays an important role in the bacterial defense system toward oxidative stress. This chain is 33 kDa chaperonin, found in Shewanella oneidensis (strain ATCC 700550 / JCM 31522 / CIP 106686 / LMG 19005 / NCIMB 14063 / MR-1).